Reading from the N-terminus, the 432-residue chain is 3-phosphoshikimate 1-carboxyvinyltransferase (432 aa).

3-phosphoshikimate contacts are provided by lysine 23, serine 24, and arginine 28. Lysine 23 is a phosphoenolpyruvate binding site. 2 residues coordinate phosphoenolpyruvate: glycine 95 and arginine 123. Serine 167, glutamine 169, aspartate 317, and lysine 344 together coordinate 3-phosphoshikimate. Glutamine 169 provides a ligand contact to phosphoenolpyruvate. The active-site Proton acceptor is the aspartate 317. Phosphoenolpyruvate-binding residues include arginine 348 and arginine 390.

This sequence belongs to the EPSP synthase family. As to quaternary structure, monomer.

It localises to the cytoplasm. It catalyses the reaction 3-phosphoshikimate + phosphoenolpyruvate = 5-O-(1-carboxyvinyl)-3-phosphoshikimate + phosphate. It participates in metabolic intermediate biosynthesis; chorismate biosynthesis; chorismate from D-erythrose 4-phosphate and phosphoenolpyruvate: step 6/7. Its function is as follows. Catalyzes the transfer of the enolpyruvyl moiety of phosphoenolpyruvate (PEP) to the 5-hydroxyl of shikimate-3-phosphate (S3P) to produce enolpyruvyl shikimate-3-phosphate and inorganic phosphate. This chain is 3-phosphoshikimate 1-carboxyvinyltransferase, found in Staphylococcus carnosus (strain TM300).